Here is a 394-residue protein sequence, read N- to C-terminus: Elongation factor Tu (394 aa).

The tr-type G domain occupies 10–204; the sequence is KPHLNVGTIG…TLDTYIEDPV (195 aa). Positions 19 to 26 are G1; that stretch reads GHVDHGKT. Position 19–26 (19–26) interacts with GTP; the sequence is GHVDHGKT. Mg(2+) is bound at residue T26. Positions 60-64 are G2; sequence GITIK. The G3 stretch occupies residues 81 to 84; it reads DCPG. Residues 81–85 and 136–139 each bind GTP; these read DCPGH and NKCD. The G4 stretch occupies residues 136-139; the sequence is NKCD. A G5 region spans residues 174 to 176; it reads SAL.

It belongs to the TRAFAC class translation factor GTPase superfamily. Classic translation factor GTPase family. EF-Tu/EF-1A subfamily. In terms of assembly, monomer.

The protein resides in the cytoplasm. The enzyme catalyses GTP + H2O = GDP + phosphate + H(+). Functionally, GTP hydrolase that promotes the GTP-dependent binding of aminoacyl-tRNA to the A-site of ribosomes during protein biosynthesis. This is Elongation factor Tu from Onion yellows phytoplasma (strain OY-M).